Consider the following 2113-residue polypeptide: Ninein (2113 aa).

EF-hand domains lie at 8 to 43 and 42 to 77; these read QHEA…LCLE and LEDV…ILSR. Phosphoserine is present on serine 152. EF-hand domains lie at 182-217 and 219-252; these read WIEE…YGLQ and VDGA…TGKS. GTP is bound at residue 245–252; that stretch reads GLFKTGKS. Serine 269 bears the Phosphoserine mark. 300-304 serves as a coordination point for GTP; sequence DGMGQ. One can recognise an EF-hand 5 domain in the interval 317-352; sequence EGIENSQEILKALDFSLDGNINLTELTLALENELLV. The stretch at 358-570 forms a coiled coil; the sequence is HQAALASFKA…YQAQGRVLRL (213 aa). Residue 420–423 participates in GTP binding; sequence RKLD. The segment at 578 to 599 is disordered; it reads EELDGHSGGIEPDQGPGSEECN. Coiled-coil stretches lie at residues 620–926, 958–1008, 1175–1323, and 1425–1806; these read RDLC…ESQH, EQLA…STEI, EDTR…MEKV, and AALL…IDKD. The tract at residues 798–1495 is important for interaction with CEP170; sequence EMETECNRRV…QDLQITCGEM (698 aa). 2 positions are modified to phosphoserine: serine 1540 and serine 1826. Coiled coils occupy residues 1852–1910 and 1971–2093; these read VQNT…KEQS and REQF…IASL. Disordered stretches follow at residues 1899-1922 and 1988-2008; these read KREC…MGSL and SQHL…PQGN. Residues 1988 to 1999 are compositionally biased toward basic and acidic residues; it reads SQHLQEELENRT.

In terms of assembly, homooligomer. Interacts with GSK3B/GSK3-beta via its C-terminal domain. Interacts with C14ORF166, such interaction may prevent its phosphorylation by GSK3B. Interacts with AUNIP (via N-terminus). Identified in a complex with AUNIP and AURKA. Interacts with CCDC120. Interacts (via C-terminus) with CEP250. Interacts with CEP170. Interacts (via N-terminus) with the gamma-tubulin ring complex component TUBGCP3. Interacts with gamma-tubulin. Isoform 4 does not interact with CEP170 or CEP250. Phosphorylated by AURKA/Aurora kinase A and PKA kinases but not CK2 or AURKB/Aurora kinase B. In terms of tissue distribution, widely expressed. Highly expressed in spleen, bone marrow and skin. Weakly expressed in liver and small intestine. Expressed in brain.

It localises to the cytoplasm. The protein resides in the cytoskeleton. Its subcellular location is the microtubule organizing center. The protein localises to the centrosome. It is found in the centriole. Centrosomal protein required for the positioning and anchorage of the microtubule minus-end in epithelial cells. May also act as a centrosome maturation factor. May play a role in microtubule nucleation, by recruiting the gamma-tubulin ring complex to the centrosome. Overexpression does not perturb nucleation or elongation of microtubules but suppresses release of microtubules. Required for centriole organization and microtubule anchoring at the mother centriole. The sequence is that of Ninein from Mus musculus (Mouse).